The sequence spans 1501 residues: Pleiotropic ABC efflux transporter of multiple drugs CDR1 (1501 aa).

The tract at residues methionine 1–asparagine 30 is disordered. Residues methionine 1–serine 513 are Cytoplasmic-facing. Residues serine 2–proline 512 are NBD1. A compositionally biased stretch (basic and acidic residues) spans serine 8–isoleucine 18. Positions leucine 150 to glutamine 404 constitute an ABC transporter 1 domain. Residues isoleucine 514 to tyrosine 534 form a helical membrane-spanning segment. Residues asparagine 535–alanine 548 are Extracellular-facing. The chain crosses the membrane as a helical span at residues alanine 549–phenylalanine 569. The Cytoplasmic portion of the chain corresponds to glutamate 570–glutamate 597. The chain crosses the membrane as a helical span at residues leucine 598 to phenylalanine 618. Topologically, residues arginine 619–proline 622 are extracellular. Residues glycine 623–phenylalanine 643 form a helical membrane-spanning segment. The Cytoplasmic segment spans residues arginine 644 to serine 654. Residues glycine 655 to isoleucine 675 traverse the membrane as a helical segment. Residues proline 676 to asparagine 764 lie on the Extracellular side of the membrane. A helical membrane pass occupies residues leucine 765–phenylalanine 785. Residues asparagine 786–glycine 1195 lie on the Cytoplasmic side of the membrane. The segment at asparagine 786–glycine 1195 is NBD2. An ABC transporter 2 domain is found at phenylalanine 859–alanine 1103. Position 895 to 902 (glycine 895 to threonine 902) interacts with ATP. The stretch at arginine 1137–aspartate 1164 forms a coiled coil. The helical transmembrane segment at tyrosine 1196 to phenylalanine 1216 threads the bilayer. Residues lysine 1217–methionine 1229 lie on the Extracellular side of the membrane. A helical membrane pass occupies residues phenylalanine 1230–phenylalanine 1250. Residues valine 1251 to glutamate 1280 are Cytoplasmic-facing. Residues isoleucine 1281 to leucine 1301 form a helical membrane-spanning segment. Residues tyrosine 1302–arginine 1314 are Extracellular-facing. A helical membrane pass occupies residues glycine 1315 to leucine 1335. At cysteine 1336 to threonine 1355 the chain is on the cytoplasmic side. The chain crosses the membrane as a helical span at residues methionine 1356–phenylalanine 1376. Topologically, residues methionine 1377–asparagine 1466 are extracellular. A helical transmembrane segment spans residues phenylalanine 1467–leucine 1487. At alanine 1488–lysine 1501 the chain is on the cytoplasmic side.

It belongs to the ABC transporter superfamily.

It localises to the cell membrane. With respect to regulation, disulfiram reverses CDR1-mediated drug resistance by interaction with both ATP and substrate-binding sites of the transporter and may be useful for antifungal therapy. Its function is as follows. Pleiotropic ABC efflux transporter that confers resistance to numerous chemicals including anisomycin, cycloheximide, fluconazole, miconazole, ketoconazole, itriconazole, nystatin, terbinafine, amorolfine, brefeldin A, amphotericin B, fluphenazine, as well as estrogen. Plays a role in farnesol-induced apoptotic process through glutathione efflux activity. Mediates in-to-out translocation of membrane phospholipids including aminophospholipids and thus regulates asymmetric distribution of phosphatidylethanolamine. Exhibits nucleoside triphosphatase activity. This is Pleiotropic ABC efflux transporter of multiple drugs CDR1 (CDR1) from Candida albicans (strain SC5314 / ATCC MYA-2876) (Yeast).